A 65-amino-acid polypeptide reads, in one-letter code: uncharacterized protein (65 aa).

This is an uncharacterized protein from Mycobacterium tuberculosis (strain ATCC 25618 / H37Rv).